A 297-amino-acid chain; its full sequence is Protoheme IX farnesyltransferase 1 (297 aa).

The next 9 membrane-spanning stretches (helical) occupy residues 23–43, 45–65, 93–113, 117–137, 145–165, 171–191, 216–236, 241–261, and 277–297; these read VVVL…RAGV, WSVL…AAVV, LPAL…LLAF, LTAW…TGFL, IVIG…AVSG, PLLL…ALAI, LHIL…YAIH, LYLA…WVLY, and IAYL…LLNL.

Belongs to the UbiA prenyltransferase family. Protoheme IX farnesyltransferase subfamily.

Its subcellular location is the cell inner membrane. It carries out the reaction heme b + (2E,6E)-farnesyl diphosphate + H2O = Fe(II)-heme o + diphosphate. It functions in the pathway porphyrin-containing compound metabolism; heme O biosynthesis; heme O from protoheme: step 1/1. Functionally, converts heme B (protoheme IX) to heme O by substitution of the vinyl group on carbon 2 of heme B porphyrin ring with a hydroxyethyl farnesyl side group. This Pseudomonas putida (strain GB-1) protein is Protoheme IX farnesyltransferase 1.